The following is a 231-amino-acid chain: Fibrillarin-like rRNA/tRNA 2'-O-methyltransferase (231 aa).

Residues 88-89 (TT), 106-107 (EF), 131-132 (DA), and 151-154 (DVAQ) contribute to the S-adenosyl-L-methionine site.

Belongs to the methyltransferase superfamily. Fibrillarin family. As to quaternary structure, interacts with nop5. Component of box C/D small ribonucleoprotein (sRNP) particles that contain rpl7ae, FlpA and nop5, plus a guide RNA.

Involved in pre-rRNA and tRNA processing. Utilizes the methyl donor S-adenosyl-L-methionine to catalyze the site-specific 2'-hydroxyl methylation of ribose moieties in rRNA and tRNA. Site specificity is provided by a guide RNA that base pairs with the substrate. Methylation occurs at a characteristic distance from the sequence involved in base pairing with the guide RNA. This is Fibrillarin-like rRNA/tRNA 2'-O-methyltransferase from Methanococcus aeolicus (strain ATCC BAA-1280 / DSM 17508 / OCM 812 / Nankai-3).